The chain runs to 349 residues: Probable dual-specificity RNA methyltransferase RlmN (349 aa).

Residue Glu-93 is the Proton acceptor of the active site. Residues 99 to 329 form the Radical SAM core domain; the sequence is YKHGNTICVS…TTIRREMGSD (231 aa). A disulfide bridge links Cys-106 with Cys-334. Residues Cys-113, Cys-117, and Cys-120 each contribute to the [4Fe-4S] cluster site. S-adenosyl-L-methionine-binding positions include 160–161, Ser-192, 215–217, and Asn-291; these read GE and SLH. The active-site S-methylcysteine intermediate is Cys-334.

It belongs to the radical SAM superfamily. RlmN family. It depends on [4Fe-4S] cluster as a cofactor.

It is found in the cytoplasm. The catalysed reaction is adenosine(2503) in 23S rRNA + 2 reduced [2Fe-2S]-[ferredoxin] + 2 S-adenosyl-L-methionine = 2-methyladenosine(2503) in 23S rRNA + 5'-deoxyadenosine + L-methionine + 2 oxidized [2Fe-2S]-[ferredoxin] + S-adenosyl-L-homocysteine. It catalyses the reaction adenosine(37) in tRNA + 2 reduced [2Fe-2S]-[ferredoxin] + 2 S-adenosyl-L-methionine = 2-methyladenosine(37) in tRNA + 5'-deoxyadenosine + L-methionine + 2 oxidized [2Fe-2S]-[ferredoxin] + S-adenosyl-L-homocysteine. Its function is as follows. Specifically methylates position 2 of adenine 2503 in 23S rRNA and position 2 of adenine 37 in tRNAs. The polypeptide is Probable dual-specificity RNA methyltransferase RlmN (Clostridium tetani (strain Massachusetts / E88)).